Consider the following 767-residue polypeptide: Pyrin (767 aa).

Residues Met1–Thr92 enclose the Pyrin domain. The disordered stretch occupies residues His94 to Gly219. Polar residues-rich tracts occupy residues Gly126–Ala142, Leu165–Thr176, and Thr183–Gly208. Ser241 bears the Phosphoserine mark. The disordered stretch occupies residues Thr311 to Ser346. The span at Thr321–Thr340 shows a compositional bias: polar residues. The B box-type zinc finger occupies Gln439–Ile481. 4 residues coordinate Zn(2+): Cys444, His447, Cys467, and His473. Positions Ile481 to Arg510 form a coiled coil. The segment at Lys489 to Met647 is required for homotrimerization and induction of pyroptosomes. Residues Gly697–Ile719 form a disordered region.

In terms of assembly, homotrimer. Interacts (via the B box-type zinc finger) with PSTPIP1. Interacts (via the B30.2/SPRY domain) with several components of the inflammasome complex, including CASP1 p20 and p10 subunits, CASP5, PYCARD, NLRP1, NLRP2 and NLRP3, as well as with unprocessed IL1B; this interaction may lead to autophagic degradation of these proteins. Component of the AIM2 PANoptosome complex, a multiprotein complex that drives inflammatory cell death (PANoptosis). Interacts with NFKBIA and RELA. Interacts weakly with VASP and ACTR3. Interacts with active ULK1 (phosphorylated on 'Ser-317') and BECN1 simultaneously. Also interacts with ATG16L1 (via WD repeats), and with ATG8 family members, including GABARAP, GABARAPL1 and, to a lesser extent, GABARAPL2, MAP1LC3A/LC3A and MAP1LC3C/LC3C. Interacts with TRIM21. Interacts with YWHAB, YWHAE, YWHAG, YWHAH, YWHAQ and YWHAZ; the interaction is required for the down-regulation of pyrin pro-inflammatory activity. Post-translationally, phosphorylation at Ser-241 is required for the interaction with 14-3-3 proteins and down-regulation of pyrin pro-inflammatory activity. Degraded along with the delivery of its substrates to autolysosomal compartments (at protein level). As to expression, expressed in spleen peripheral blood granulocytes. Not expressed in lymphocytes, thymus, testis, ovary, heart, brain, lung, liver, kidney and muscle.

The protein resides in the cytoplasm. Its subcellular location is the cytoskeleton. The protein localises to the cell projection. It is found in the ruffle. It localises to the lamellipodium. The protein resides in the cytoplasmic vesicle. Its subcellular location is the autophagosome. The protein localises to the nucleus. Involved in the regulation of innate immunity and the inflammatory response in response to IFNG/IFN-gamma. Organizes autophagic machinery by serving as a platform for the assembly of ULK1, Beclin 1/BECN1, ATG16L1, and ATG8 family members and recognizes specific autophagy targets, thus coordinating target recognition with assembly of the autophagic apparatus and initiation of autophagy. Acts as an autophagy receptor for the degradation of several inflammasome components, including CASP1, NLRP1 and NLRP3, hence preventing excessive IL1B- and IL18-mediated inflammation. However, it can also have a positive effect in the inflammatory pathway, acting as an innate immune sensor that triggers PYCARD/ASC specks formation, caspase-1 activation, and IL1B and IL18 production. Together with AIM2, also acts as a mediator of pyroptosis, necroptosis and apoptosis (PANoptosis), an integral part of host defense against pathogens, in response to bacterial infection. It is required for PSTPIP1-induced PYCARD/ASC oligomerization and inflammasome formation. Recruits PSTPIP1 to inflammasomes, and is required for PSTPIP1 oligomerization. The protein is Pyrin of Mus musculus (Mouse).